Here is a 570-residue protein sequence, read N- to C-terminus: Sulfite reductase [NADPH] hemoprotein beta-component (570 aa).

[4Fe-4S] cluster is bound by residues C434, C440, C479, and C483. Siroheme is bound at residue C483.

It belongs to the nitrite and sulfite reductase 4Fe-4S domain family. Alpha(8)-beta(8). The alpha component is a flavoprotein, the beta component is a hemoprotein. Requires siroheme as cofactor. [4Fe-4S] cluster is required as a cofactor.

The catalysed reaction is hydrogen sulfide + 3 NADP(+) + 3 H2O = sulfite + 3 NADPH + 4 H(+). It functions in the pathway sulfur metabolism; hydrogen sulfide biosynthesis; hydrogen sulfide from sulfite (NADPH route): step 1/1. Its function is as follows. Component of the sulfite reductase complex that catalyzes the 6-electron reduction of sulfite to sulfide. This is one of several activities required for the biosynthesis of L-cysteine from sulfate. This chain is Sulfite reductase [NADPH] hemoprotein beta-component, found in Salmonella dublin (strain CT_02021853).